Consider the following 479-residue polypeptide: M-phase inducer phosphatase (479 aa).

The segment at 182 to 218 is disordered; it reads MTESNTNSTTTPPPKTPETARDCFKRPEPPASANCSP. Residues 199–209 show a composition bias toward basic and acidic residues; sequence ETARDCFKRPE. The Rhodanese domain maps to 316 to 432; it reads KVASYRIIDC…FFESHVELCE (117 aa). Cys379 is an active-site residue. Phosphoserine is present on Ser455.

This sequence belongs to the MPI phosphatase family.

The catalysed reaction is O-phospho-L-tyrosyl-[protein] + H2O = L-tyrosyl-[protein] + phosphate. Functionally, this protein functions as a dosage-dependent inducer in mitotic control. It is a tyrosine protein phosphatase required for progression of the cell cycle. It may directly dephosphorylate Cdk1 and activate the Cdk1 activity. The protein is M-phase inducer phosphatase (stg) of Drosophila melanogaster (Fruit fly).